The chain runs to 240 residues: UDP-2,3-diacylglucosamine hydrolase (240 aa).

Positions 8, 10, 41, 78, and 113 each coordinate Mn(2+). 78-79 (NR) contributes to the substrate binding site. 5 residues coordinate substrate: Asp121, Ser159, Asn163, Lys166, and His194. Residues His194 and His196 each contribute to the Mn(2+) site.

The protein belongs to the LpxH family. It depends on Mn(2+) as a cofactor.

The protein resides in the cell inner membrane. The enzyme catalyses UDP-2-N,3-O-bis[(3R)-3-hydroxytetradecanoyl]-alpha-D-glucosamine + H2O = 2-N,3-O-bis[(3R)-3-hydroxytetradecanoyl]-alpha-D-glucosaminyl 1-phosphate + UMP + 2 H(+). It participates in glycolipid biosynthesis; lipid IV(A) biosynthesis; lipid IV(A) from (3R)-3-hydroxytetradecanoyl-[acyl-carrier-protein] and UDP-N-acetyl-alpha-D-glucosamine: step 4/6. Functionally, hydrolyzes the pyrophosphate bond of UDP-2,3-diacylglucosamine to yield 2,3-diacylglucosamine 1-phosphate (lipid X) and UMP by catalyzing the attack of water at the alpha-P atom. Involved in the biosynthesis of lipid A, a phosphorylated glycolipid that anchors the lipopolysaccharide to the outer membrane of the cell. This is UDP-2,3-diacylglucosamine hydrolase from Shewanella baltica (strain OS185).